The sequence spans 236 residues: Putative protein ZBED10P (236 aa).

This Homo sapiens (Human) protein is Putative protein ZBED10P.